The sequence spans 3726 residues: Histone-lysine N-methyltransferase trithorax (3726 aa).

Disordered stretches follow at residues 1-247 (MGRS…ATTS), 321-352 (QLNSPVVDNPSPSPPIASGSTPSVEGGIGVGG), 371-429 (NEVA…TAKQ), and 509-624 (AGAS…RSTR). 2 stretches are compositionally biased toward low complexity: residues 31–53 (PAEPQQPAPESQQPSGSGSGSSA) and 71–101 (GGASISGNTASSSAGSGNSGNGSSSGSSTGS). Over residues 102–115 (GSSGSGSTNGGSVN) the composition is skewed to gly residues. The span at 126-143 (LDKEAVTKDQNGDGDKTR) shows a compositional bias: basic and acidic residues. Residues 147–205 (SSAPSGKLSAAASGKALSKSSRTFSASTSVTSSGRSSGSSPDGNSGASSDGASSGISCG) show a composition bias toward low complexity. The span at 206-215 (KSTAKSTEAS) shows a compositional bias: polar residues. Low complexity predominate over residues 222 to 247 (TTGAGTCSSAKSSKASSGTTSEATTS). Low complexity-rich tracts occupy residues 384–402 (AAANGAASGKGSASNGPPA) and 509–525 (AGASSSSSNQESGSSSN). Residues 553-586 (PEDQNNAEDDEMDDDDDDEEAEEDDENEDDNDEA) show a composition bias toward acidic residues. The segment covering 587-610 (VSEKSAETEKSAGADERDPDEKQL) has biased composition (basic and acidic residues). Positions 759 to 884 (PSACSICSAV…PGMRGEAAAR (126 aa)) form a DNA-binding region, nuclear receptor. Disordered regions lie at residues 915 to 937 (TSVKWKSSGDSTSALTSIKPNPL), 981 to 1049 (LTKK…SHGV), 1115 to 1184 (VPSA…SSAK), and 1208 to 1231 (DIATSSSVTQSSNQTQGRKTKEHR). Over residues 918–937 (KWKSSGDSTSALTSIKPNPL) the composition is skewed to polar residues. Residues 986-1000 (SKQEKEKVKESEQSE) show a composition bias toward basic and acidic residues. The segment covering 1031–1041 (PQTSTTTQPSA) has biased composition (low complexity). The segment covering 1123–1132 (SPEKPTHIVT) has biased composition (basic and acidic residues). Low complexity-rich tracts occupy residues 1173-1183 (GTASAAGGSSA) and 1211-1223 (TSSSVTQSSNQTQ). 3 consecutive PHD-type zinc fingers follow at residues 1266–1347 (RALC…CTVC), 1348–1393 (YTCN…CLKC), and 1421–1482 (GNFC…CARR). The Bromo domain occupies 1496–1663 (AVMEEFKASL…SEQFPWFQNE (168 aa)). The interval 1573–1592 (FKDQQQQQQQRNANMNKPRV) is disordered. A C2HC pre-PHD-type zinc finger spans residues 1734 to 1774 (TRMCLFCRKSGEGLSGEEARLLYCGHDCWVHTNCAMWSAEV). The PHD-type 4 zinc-finger motif lies at 1795–1842 (IKCTVCGNRGATVGCNVRSCGEHYHYPCARSIDCAFLTDKSMYCPAHA). The region spanning 1884 to 1941 (RVQFHIGSLEVRQLGAIVPRFSDSYEAVVPINFLCSRLYWSSKEPWKIVEYTVRTTIQ) is the FYR N-terminal domain. Disordered regions lie at residues 1991 to 2019 (GGTDWSGEFPNPNSCVPPDENTEEEPQQQ), 2068 to 2110 (TQAM…WPAS), 2283 to 2302 (CSPTMSSNETESDVSGQGMT), 2649 to 2669 (GGGADGNQPGSNQQPLILGGT), 2866 to 2894 (SNLKQSQVKGKAASGTGTTCGAPPSIASK), 3029 to 3096 (QHFS…PTPP), and 3347 to 3381 (RKEEQRTVSQEQEQSKAAIVPTAAAPEPPQPIQEP). The segment covering 2074–2087 (NQAQNQNQQAGGAN) has biased composition (low complexity). Residues 3032 to 3043 (STSSSSSSSNCS) are compositionally biased toward low complexity. Positions 3044–3057 (LPTNVVNPMQQQAP) are enriched in polar residues. In terms of domain architecture, FYR C-terminal spans 3386 to 3470 (GPHLLYEIQS…EKCSKYTPKY (85 aa)). In terms of domain architecture, SET spans 3588–3704 (DYVGVFRSHI…QGEELTYDYK (117 aa)). Positions 3598 and 3600 each coordinate S-adenosyl-L-methionine. Cys3641 bears the S-methylcysteine; by autocatalysis mark. Residues Tyr3642 and 3665-3666 (NH) each bind S-adenosyl-L-methionine. Zn(2+) contacts are provided by Cys3668, Cys3714, Cys3716, and Cys3721. The Post-SET domain occupies 3710 to 3726 (EKIPCSCGSKRCRKYLN).

This sequence belongs to the class V-like SAM-binding methyltransferase superfamily. Histone-lysine methyltransferase family. TRX/MLL subfamily. As to quaternary structure, interacts (via SET domain) with ash1 (via SET domain). Interacts with Nup98. Maternal isoforms are expressed in syncytial blastoderm, confined to the ventral region fated to become mesoderm. An additional broad domain of expression arises during cellularization and is quickly resolved into four pair-rule-like stripes in the posterior half of the embryo.

The protein resides in the nucleus. Its subcellular location is the chromosome. The catalysed reaction is L-lysyl(9)-[histone H3] + 3 S-adenosyl-L-methionine = N(6),N(6),N(6)-trimethyl-L-lysyl(9)-[histone H3] + 3 S-adenosyl-L-homocysteine + 3 H(+). It carries out the reaction L-cysteinyl-[protein] + S-adenosyl-L-methionine = S-methyl-L-cysteinyl-[protein] + S-adenosyl-L-homocysteine + H(+). In terms of biological role, histone methyltransferase that methylates 'Lys-4' of histone H3 (H3K4me). H3K4me represents a specific tag for epigenetic transcriptional activation. Functions in segment determination through interaction with genes of bithorax (BX-C) and antennapedia (ANT-C) complexes. Acts as an activator of BX-C. Involved in the very early regulation of homeotic genes expressed only in the posterior region of the embryo. Also has auto-methylation activity on Cys-3641. The polypeptide is Histone-lysine N-methyltransferase trithorax (Drosophila melanogaster (Fruit fly)).